The chain runs to 599 residues: Translation initiation factor IF-2 (599 aa).

The tr-type G domain maps to 111–278 (PRPPIITVMG…SILLLAEILE (168 aa)). The tract at residues 120-127 (GHVDHGKT) is G1. 120 to 127 (GHVDHGKT) is a binding site for GTP. Residues 145-149 (GITQH) form a G2 region. The segment at 166-169 (DTPG) is G3. GTP-binding positions include 166–170 (DTPGH) and 220–223 (NKMD). Residues 220–223 (NKMD) form a G4 region. Positions 256–258 (SAL) are G5.

Belongs to the TRAFAC class translation factor GTPase superfamily. Classic translation factor GTPase family. IF-2 subfamily.

It is found in the cytoplasm. One of the essential components for the initiation of protein synthesis. Protects formylmethionyl-tRNA from spontaneous hydrolysis and promotes its binding to the 30S ribosomal subunits. Also involved in the hydrolysis of GTP during the formation of the 70S ribosomal complex. The polypeptide is Translation initiation factor IF-2 (Mesomycoplasma hyopneumoniae (strain 7448) (Mycoplasma hyopneumoniae)).